Here is a 218-residue protein sequence, read N- to C-terminus: Small ribosomal subunit protein uS5 (218 aa).

The tract at residues 1 to 49 (MPGRQRRDGGSGPAGQNGPNTGDNRGGGDRRGGGRDDRRGGQSAEKSNH) is disordered. Over residues 26-49 (GGGDRRGGGRDDRRGGQSAEKSNH) the composition is skewed to basic and acidic residues. The region spanning 49–112 (HIERVVTINR…EEARKSFFRV (64 aa)) is the S5 DRBM domain.

It belongs to the universal ribosomal protein uS5 family. As to quaternary structure, part of the 30S ribosomal subunit. Contacts proteins S4 and S8.

With S4 and S12 plays an important role in translational accuracy. Functionally, located at the back of the 30S subunit body where it stabilizes the conformation of the head with respect to the body. The polypeptide is Small ribosomal subunit protein uS5 (Rhodococcus jostii (strain RHA1)).